Here is a 108-residue protein sequence, read N- to C-terminus: Nucleoid-associated protein BH02310 (108 aa).

The protein belongs to the YbaB/EbfC family. As to quaternary structure, homodimer.

The protein localises to the cytoplasm. It localises to the nucleoid. Its function is as follows. Binds to DNA and alters its conformation. May be involved in regulation of gene expression, nucleoid organization and DNA protection. In Bartonella henselae (strain ATCC 49882 / DSM 28221 / CCUG 30454 / Houston 1) (Rochalimaea henselae), this protein is Nucleoid-associated protein BH02310.